The primary structure comprises 64 residues: Large ribosomal subunit protein uL29 (64 aa).

It belongs to the universal ribosomal protein uL29 family.

The sequence is that of Large ribosomal subunit protein uL29 from Chloroherpeton thalassium (strain ATCC 35110 / GB-78).